Consider the following 229-residue polypeptide: 2-C-methyl-D-erythritol 4-phosphate cytidylyltransferase (229 aa).

This sequence belongs to the IspD/TarI cytidylyltransferase family. IspD subfamily.

It carries out the reaction 2-C-methyl-D-erythritol 4-phosphate + CTP + H(+) = 4-CDP-2-C-methyl-D-erythritol + diphosphate. It functions in the pathway isoprenoid biosynthesis; isopentenyl diphosphate biosynthesis via DXP pathway; isopentenyl diphosphate from 1-deoxy-D-xylulose 5-phosphate: step 2/6. Functionally, catalyzes the formation of 4-diphosphocytidyl-2-C-methyl-D-erythritol from CTP and 2-C-methyl-D-erythritol 4-phosphate (MEP). The sequence is that of 2-C-methyl-D-erythritol 4-phosphate cytidylyltransferase from Neisseria meningitidis serogroup A / serotype 4A (strain DSM 15465 / Z2491).